The sequence spans 533 residues: Adenylate kinase 7 (533 aa).

The interval 177–426 (PVKICILGPP…EPRNYGLTDE (250 aa)) is adenylate kinase. 187-192 (AVGKSS) provides a ligand contact to ATP. The interval 207-265 (QLKDVISEAIAKLETIVAPKDIGEGKEEVEEEEEEENVEDAQELLDGIKESMEQNAGQL) is NMP. AMP contacts are provided by residues 242–265 (ENVE…AGQL), 292–295 (GFPK), and glutamine 299. The tract at residues 347–357 (NLPERIVAGTH) is LID. AMP is bound at residue arginine 365. Glycine 397 is an ATP binding site. Residues 419-487 (RNYGLTDEEK…EERELLEAQS (69 aa)) adopt a coiled-coil conformation. Residues 489-533 (PLRNYLMTYVMPTLIQGLNECCNVRPEDPVDFLAEYLFKNNPEAQ) are DPY-30.

The protein in the central section; belongs to the adenylate kinase family. It in the C-terminal section; belongs to the dpy-30 family.

It localises to the cytoplasm. It is found in the cytosol. The protein localises to the cell projection. Its subcellular location is the cilium. The protein resides in the flagellum. It carries out the reaction AMP + ATP = 2 ADP. It catalyses the reaction a 2'-deoxyribonucleoside 5'-diphosphate + ATP = a 2'-deoxyribonucleoside 5'-triphosphate + ADP. The catalysed reaction is a ribonucleoside 5'-diphosphate + ATP = a ribonucleoside 5'-triphosphate + ADP. Functionally, nucleoside monophosphate (NMP) kinase that catalyzes the reversible transfer of the terminal phosphate group between nucleoside triphosphates and monophosphates. Has highest activity toward AMP, and weaker activity toward dAMP, CMP and dCMP. Also displays broad nucleoside diphosphate kinase activity. Involved in maintaining ciliary structure and function. The polypeptide is Adenylate kinase 7 (AK7) (Macaca fascicularis (Crab-eating macaque)).